The primary structure comprises 235 residues: Large ribosomal subunit protein uL1 (235 aa).

The protein belongs to the universal ribosomal protein uL1 family. In terms of assembly, part of the 50S ribosomal subunit.

Its function is as follows. Binds directly to 23S rRNA. The L1 stalk is quite mobile in the ribosome, and is involved in E site tRNA release. In terms of biological role, protein L1 is also a translational repressor protein, it controls the translation of the L11 operon by binding to its mRNA. In Parasynechococcus marenigrum (strain WH8102), this protein is Large ribosomal subunit protein uL1.